Reading from the N-terminus, the 726-residue chain is Catalase-peroxidase (726 aa).

Residues 1–33 (MSTTDDTHNTLSTGKCPFHQGGHDRSAGAGTAS) form a disordered region. Positions 105–226 (WHGAGTYRSI…LGATEMGLIY (122 aa)) form a cross-link, tryptophyl-tyrosyl-methioninium (Trp-Tyr) (with M-252). The Proton acceptor role is filled by H106. A cross-link (tryptophyl-tyrosyl-methioninium (Tyr-Met) (with W-105)) is located at residues 226–252 (YVNPEGPDHSGEPLSAAAAIRATFGNM). H267 contributes to the heme b binding site.

Belongs to the peroxidase family. Peroxidase/catalase subfamily. As to quaternary structure, homodimer or homotetramer. Requires heme b as cofactor. Formation of the three residue Trp-Tyr-Met cross-link is important for the catalase, but not the peroxidase activity of the enzyme.

It catalyses the reaction H2O2 + AH2 = A + 2 H2O. The catalysed reaction is 2 H2O2 = O2 + 2 H2O. Its function is as follows. Bifunctional enzyme with both catalase and broad-spectrum peroxidase activity. This is Catalase-peroxidase from Salmonella heidelberg (strain SL476).